The following is a 4001-amino-acid chain: Ankyrin repeat and KH domain-containing protein mask (4001 aa).

Over residues 1 to 14 (MNNDAKNHESDDLN) the composition is skewed to basic and acidic residues. 3 disordered regions span residues 1-61 (MNND…NRQL), 91-174 (KNEP…GGGS), and 391-494 (DTDT…FLLD). Polar residues predominate over residues 15–30 (VRSTAYFNQQTTTNQP). The span at 38–61 (NNTGSGSGSNNNNNNTNQNPNRQL) shows a compositional bias: low complexity. The segment covering 94 to 117 (PLTTTESSGVLTNTPLPSNSRLKV) has biased composition (polar residues). Positions 118 to 159 (NNNNNTNNTAKMSGTSSSQSSATPTPPTASSSTTTTTTTNIS) are enriched in low complexity. A compositionally biased stretch (gly residues) spans 160-174 (TGGGGSGSSGGGGGS). Composition is skewed to acidic residues over residues 408 to 425 (SESE…ESDP) and 434 to 486 (VRED…EDAP). Phosphoserine is present on Ser-501. ANK repeat units follow at residues 546–575 (SGFS…NVNL), 584–614 (DGES…QVED), 618–647 (KDST…DVNA), 651–680 (TGNT…NVEE), 684–713 (NGHT…GINT), 718–747 (FKES…DQEH), 751–780 (EMHT…QVNM), 784–813 (SFES…NIEE), 817–846 (EGYT…NINA), 851–880 (TQET…NLEL), 881–910 (GAST…NVHA), 914–943 (TGDT…ELEH), 947–976 (GGRT…NVNK), 981–1011 (NDHT…PFHK), and 1014–1043 (DNST…ISPT). Disordered stretches follow at residues 1046 to 1067 (AASA…NQMR) and 1306 to 1376 (QPGE…PTAL). The span at 1367 to 1376 (DNNQPVPTAL) shows a compositional bias: polar residues. A phosphoserine mark is found at Ser-1389 and Ser-1588. 6 disordered regions span residues 1583–1612 (GDQP…RLGS), 1646–1669 (SDLE…ENTL), 1682–1779 (EDGI…SLPL), 1852–1872 (VVHQ…DGSA), 2084–2108 (MAQH…QQLH), and 2225–2256 (TPAP…KERR). Composition is skewed to acidic residues over residues 1646-1657 (SDLESECEDDAE), 1685-1704 (IIVE…EEQD), and 1716-1759 (DDED…EPDS). The span at 1760-1776 (DQGTGNNNNNSKSGASS) shows a compositional bias: low complexity. The span at 2084-2093 (MAQHQAQQQQ) shows a compositional bias: low complexity. The span at 2228-2237 (PSSGVSSTKS) shows a compositional bias: polar residues. 10 ANK repeats span residues 2312–2341 (NHDT…NIEH), 2345–2374 (KGFT…ELEA), 2379–2408 (TKDT…NKEH), 2412–2441 (SDYT…EINS), 2447–2476 (LGIS…DINA), 2481–2510 (NRNT…NVEH), 2514–2543 (TGLT…DVNA), 2549–2578 (SRDT…SVEV), 2582–2611 (KGNS…DIDS), and 2615–2644 (RRVS…QFPS). Residues 2674 to 2732 (AKEAQAVKANKNASILLEELDLERTREESRKAAAARRRERKKKKKMEKKEEKRRQQQGN) are a coiled coil. Ser-2687 carries the post-translational modification Phosphoserine. Thr-2698 carries the phosphothreonine modification. A disordered region spans residues 2699–3033 (REESRKAAAA…TSTTTAASSV (335 aa)). A compositionally biased stretch (basic residues) spans 2706 to 2719 (AAARRRERKKKKKM). The segment covering 2739–2762 (MQGDDDDASDKDDDSDKDDEDEEA) has biased composition (acidic residues). 2 positions are modified to phosphoserine: Ser-2747 and Ser-2753. The span at 2793-2810 (SQSAQAAEAAANSVSTNS) shows a compositional bias: low complexity. The segment covering 2828 to 2839 (EPTQPVITSNSV) has biased composition (polar residues). The segment covering 2868 to 2886 (RQLDVKKEEPALKKKEEKN) has biased composition (basic and acidic residues). Residues 2906–2941 (ALPAKQQPSSSSKLQSSESASNINSSTATNTSSANT) show a composition bias toward low complexity. Residues 2950-2960 (ASQTASATTLN) are compositionally biased toward polar residues. The segment covering 2963 to 2975 (KRTEVDGWKEVVR) has biased composition (basic and acidic residues). Residues 2995–3004 (TATSSATSVQ) show a composition bias toward polar residues. Positions 3012–3032 (ANSSSNSSSSLTTSTTTAASS) are enriched in low complexity. The 65-residue stretch at 3036 to 3100 (MTCKKVQVPV…DATKQAHMLI (65 aa)) folds into the KH domain. Composition is skewed to low complexity over residues 3156-3178 (ASTT…ASYS), 3195-3227 (SGRS…AGSS), and 3244-3257 (NGVI…SSKS). 4 disordered regions span residues 3156-3329 (ASTT…GQGG), 3383-3457 (KPIA…QTSQ), 3520-3636 (AVGD…PPTA), and 3744-3786 (IFPQ…GGAA). A compositionally biased stretch (polar residues) spans 3262–3278 (QKSSTTLGKSSTVSPGA). The span at 3396–3416 (GSPTQVQQQHQTQQQQQQQLP) shows a compositional bias: low complexity. Residues 3417-3427 (QPAPVPGPQPQ) are compositionally biased toward pro residues. Positions 3428 to 3457 (QQPLQQQQQQQAPQQQPQQPNQQQQPQTSQ) are enriched in low complexity. The segment covering 3539–3559 (NILSSPVGSSKASSNHSTSPP) has biased composition (polar residues). The span at 3565 to 3577 (QQQQQQQPQSSQQ) shows a compositional bias: low complexity. Ser-3596 carries the post-translational modification Phosphoserine. Residues 3774–3786 (PPGTGARQPGGAA) are compositionally biased toward low complexity. Phosphoserine is present on residues Ser-3820, Ser-3822, and Ser-3825. Positions 3876–3945 (KAQPPGLQQP…HNMQAPPNMS (70 aa)) are disordered. Over residues 3891–3910 (SQQQQQQPLNWLKQQPQQQQ) the composition is skewed to low complexity.

In terms of assembly, may interact with Unc-89 (via protein kinase domain 1 or 2). Expressed ubiquitously in eye imaginal disk, slightly higher expression is seen in presumptive photoreceptors. Expressed in indirect flight muscle (IFM) (at protein level).

The protein resides in the cytoplasm. It is found in the myofibril. Its subcellular location is the sarcomere. It localises to the z line. The protein localises to the m line. In terms of biological role, mediator of receptor tyrosine kinase (RTK) signaling, and may act either downstream of MAPK or transduce signaling through a parallel branch of the RTK pathway. Required for the development and organization of indirect flight muscle sarcomeres by regulating the formation of M line and H zone and the correct assembly of thick and thin filaments in the sarcomere. This chain is Ankyrin repeat and KH domain-containing protein mask, found in Drosophila melanogaster (Fruit fly).